Reading from the N-terminus, the 589-residue chain is Netrin-G2 (589 aa).

A signal peptide spans 1–17 (MLRLLALFLHCLPLVSG). Intrachain disulfides connect C22–C39, C61–C81, and C69–C77. The 252-residue stretch at 35 to 286 (EFYACQPKVM…AISNIEVIGR (252 aa)) folds into the Laminin N-terminal domain. The NGL discriminant loop I stretch occupies residues 69 to 88 (CSHENPYLCSNECDASNPDL). N-linked (GlcNAc...) asparagine glycosylation is found at N122 and N128. Residues C171 and C195 are joined by a disulfide bond. Residues 201–203 (RWA) form an NGL discriminant loop II region. Residues 264–267 (TYVQ) form an NGL discriminant loop III region. Cystine bridges form between C287/C296, C289/C305, C307/C316, C319/C344, C413/C422, C415/C433, C436/C445, C448/C466, C469/C481, C471/C487, C489/C498, C501/C511, C516/C529, C523/C535, and C537/C546. 3 consecutive Laminin EGF-like domains span residues 287-346 (CKCN…ACAA), 413-468 (CECY…VCIE), and 469-513 (CNCN…GCYP). The N-linked (GlcNAc...) asparagine glycan is linked to N310. N455 carries N-linked (GlcNAc...) asparagine glycosylation. A glycan (N-linked (GlcNAc...) asparagine) is linked at N482. The GPI-anchor amidated glycine moiety is linked to residue G566. Residues 567-589 (IVPRPDTLLGCLLLLGLAARLAC) constitute a propeptide, removed in mature form.

In terms of assembly, interacts with LRRC4. N-glycosylated. In terms of tissue distribution, expression is restricted primarily to neurons of the CNS, particularly in the cerebral cortex, habenular nucleus and superior colliculus. Low levels in lung, kidney, heart and spleen.

It is found in the cell membrane. In terms of biological role, involved in controlling patterning and neuronal circuit formation at the laminar, cellular, subcellular and synaptic levels. Promotes neurite outgrowth of both axons and dendrites. This is Netrin-G2 (Ntng2) from Mus musculus (Mouse).